Reading from the N-terminus, the 198-residue chain is Elongation factor Ts (198 aa).

Residues 81 to 84 (TDFV) form an involved in Mg(2+) ion dislocation from EF-Tu region.

This sequence belongs to the EF-Ts family.

Its subcellular location is the cytoplasm. Functionally, associates with the EF-Tu.GDP complex and induces the exchange of GDP to GTP. It remains bound to the aminoacyl-tRNA.EF-Tu.GTP complex up to the GTP hydrolysis stage on the ribosome. The protein is Elongation factor Ts of Herpetosiphon aurantiacus (strain ATCC 23779 / DSM 785 / 114-95).